The following is an 842-amino-acid chain: Protein P (842 aa).

The interval 1–177 (MPLSYQHFRR…FCGSPYTWEQ (177 aa)) is terminal protein domain (TP). The interval 178 to 345 (DLQHGAFLDG…YCLSHLVNLL (168 aa)) is spacer. Residues 184–238 (FLDGPSRVGKEPFRQQSSRIPSRSPVGPSIQSKYQQSRLGLQSQKGPLARGQQGR) form a disordered region. Over residues 197–208 (RQQSSRIPSRSP) the composition is skewed to low complexity. Residues 212–228 (SIQSKYQQSRLGLQSQK) show a composition bias toward polar residues. A polymerase/reverse transcriptase domain (RT) region spans residues 346–689 (QDWGPCTEHG…YMNLYPVARQ (344 aa)). The Reverse transcriptase domain maps to 356–599 (EHHIRIPRTP…YSLNFMGYVI (244 aa)). Mg(2+) contacts are provided by D428, D550, and D551.

The protein belongs to the hepadnaviridae P protein family.

The catalysed reaction is DNA(n) + a 2'-deoxyribonucleoside 5'-triphosphate = DNA(n+1) + diphosphate. It carries out the reaction Endonucleolytic cleavage to 5'-phosphomonoester.. Its activity is regulated as follows. Activated by host HSP70 and HSP40 in vitro to be able to bind the epsilon loop of the pgRNA. Because deletion of the RNase H region renders the protein partly chaperone-independent, the chaperones may be needed indirectly to relieve occlusion of the RNA-binding site by this domain. Inhibited by several reverse-transcriptase inhibitors: Lamivudine, Adefovir and Entecavir. Multifunctional enzyme that converts the viral RNA genome into dsDNA in viral cytoplasmic capsids. This enzyme displays a DNA polymerase activity that can copy either DNA or RNA templates, and a ribonuclease H (RNase H) activity that cleaves the RNA strand of RNA-DNA heteroduplexes in a partially processive 3'- to 5'-endonucleasic mode. Neo-synthesized pregenomic RNA (pgRNA) are encapsidated together with the P protein, and reverse-transcribed inside the nucleocapsid. Initiation of reverse-transcription occurs first by binding the epsilon loop on the pgRNA genome, and is initiated by protein priming, thereby the 5'-end of (-)DNA is covalently linked to P protein. Partial (+)DNA is synthesized from the (-)DNA template and generates the relaxed circular DNA (RC-DNA) genome. After budding and infection, the RC-DNA migrates in the nucleus, and is converted into a plasmid-like covalently closed circular DNA (cccDNA). The activity of P protein does not seem to be necessary for cccDNA generation, and is presumably released from (+)DNA by host nuclear DNA repair machinery. This is Protein P from Hepatitis B virus genotype G (isolate IG29227/2000) (HBV-G).